A 23-amino-acid chain; its full sequence is Caerulein precursor fragment R6 (23 aa).

Expressed by the skin glands.

Its subcellular location is the secreted. In terms of biological role, antimicrobial peptide. The protein is Caerulein precursor fragment R6 of Xenopus ruwenzoriensis (Uganda clawed frog).